We begin with the raw amino-acid sequence, 41 residues long: Large ribosomal subunit protein bL36A (41 aa).

This sequence belongs to the bacterial ribosomal protein bL36 family.

This Vibrio cholerae serotype O1 (strain ATCC 39541 / Classical Ogawa 395 / O395) protein is Large ribosomal subunit protein bL36A.